A 446-amino-acid polypeptide reads, in one-letter code: Glycine--tRNA ligase (446 aa).

Arg100 and Glu158 together coordinate substrate. Residues Arg190–Glu192, Phe200–Phe205, Glu275–Leu276, and Gly319–Arg322 each bind ATP. A substrate-binding site is contributed by Phe205–Glu209. Glu315 to Gly319 contacts substrate.

This sequence belongs to the class-II aminoacyl-tRNA synthetase family. In terms of assembly, homodimer.

The protein resides in the cytoplasm. It carries out the reaction tRNA(Gly) + glycine + ATP = glycyl-tRNA(Gly) + AMP + diphosphate. Functionally, catalyzes the attachment of glycine to tRNA(Gly). In Mycoplasma genitalium (strain ATCC 33530 / DSM 19775 / NCTC 10195 / G37) (Mycoplasmoides genitalium), this protein is Glycine--tRNA ligase.